A 615-amino-acid polypeptide reads, in one-letter code: DNA mismatch repair protein MutL (615 aa).

Residues 362-397 (HFAEPAVREPVAPRYTPAPASGSRPAAPWPNAQPGY) form a disordered region. Positions 378 to 391 (PAPASGSRPAAPWP) are enriched in low complexity.

This sequence belongs to the DNA mismatch repair MutL/HexB family.

Its function is as follows. This protein is involved in the repair of mismatches in DNA. It is required for dam-dependent methyl-directed DNA mismatch repair. May act as a 'molecular matchmaker', a protein that promotes the formation of a stable complex between two or more DNA-binding proteins in an ATP-dependent manner without itself being part of a final effector complex. The polypeptide is DNA mismatch repair protein MutL (Escherichia coli O17:K52:H18 (strain UMN026 / ExPEC)).